Here is a 215-residue protein sequence, read N- to C-terminus: Adenylate kinase (215 aa).

G10–T15 serves as a coordination point for ATP. The tract at residues S30–V59 is NMP. AMP-binding positions include T31, R36, D57–V59, G85–R88, and Q92. Residues G126–D163 are LID. ATP is bound at residue R127. The Zn(2+) site is built by C130 and C133. T136–Y137 is a binding site for ATP. Residues C150 and D153 each coordinate Zn(2+). Residues R160 and R171 each contribute to the AMP site. ATP is bound at residue Q199.

It belongs to the adenylate kinase family. As to quaternary structure, monomer.

It localises to the cytoplasm. The catalysed reaction is AMP + ATP = 2 ADP. Its pathway is purine metabolism; AMP biosynthesis via salvage pathway; AMP from ADP: step 1/1. In terms of biological role, catalyzes the reversible transfer of the terminal phosphate group between ATP and AMP. Plays an important role in cellular energy homeostasis and in adenine nucleotide metabolism. This is Adenylate kinase from Listeria monocytogenes serotype 4b (strain CLIP80459).